The chain runs to 184 residues: ATP synthase subunit b, chloroplastic (184 aa).

Residues 27–49 traverse the membrane as a helical segment; that stretch reads LATNPINLSVVFGVLIFFGKGVL.

This sequence belongs to the ATPase B chain family. In terms of assembly, F-type ATPases have 2 components, F(1) - the catalytic core - and F(0) - the membrane proton channel. F(1) has five subunits: alpha(3), beta(3), gamma(1), delta(1), epsilon(1). F(0) has four main subunits: a(1), b(1), b'(1) and c(10-14). The alpha and beta chains form an alternating ring which encloses part of the gamma chain. F(1) is attached to F(0) by a central stalk formed by the gamma and epsilon chains, while a peripheral stalk is formed by the delta, b and b' chains.

The protein localises to the plastid. It localises to the chloroplast thylakoid membrane. Its function is as follows. F(1)F(0) ATP synthase produces ATP from ADP in the presence of a proton or sodium gradient. F-type ATPases consist of two structural domains, F(1) containing the extramembraneous catalytic core and F(0) containing the membrane proton channel, linked together by a central stalk and a peripheral stalk. During catalysis, ATP synthesis in the catalytic domain of F(1) is coupled via a rotary mechanism of the central stalk subunits to proton translocation. Functionally, component of the F(0) channel, it forms part of the peripheral stalk, linking F(1) to F(0). The chain is ATP synthase subunit b, chloroplastic from Olimarabidopsis pumila (Dwarf rocket).